Consider the following 361-residue polypeptide: tRNA-specific 2-thiouridylase MnmA (361 aa).

ATP-binding positions include 11–18 (GMSGGVDS) and Met-37. The active-site Nucleophile is the Cys-106. A disulfide bridge links Cys-106 with Cys-202. ATP is bound at residue Gly-130. The tract at residues 152–154 (KDQ) is interaction with tRNA. Cys-202 functions as the Cysteine persulfide intermediate in the catalytic mechanism. Residues 308–309 (RY) form an interaction with tRNA region.

The protein belongs to the MnmA/TRMU family.

Its subcellular location is the cytoplasm. The catalysed reaction is S-sulfanyl-L-cysteinyl-[protein] + uridine(34) in tRNA + AH2 + ATP = 2-thiouridine(34) in tRNA + L-cysteinyl-[protein] + A + AMP + diphosphate + H(+). Its function is as follows. Catalyzes the 2-thiolation of uridine at the wobble position (U34) of tRNA, leading to the formation of s(2)U34. The sequence is that of tRNA-specific 2-thiouridylase MnmA from Clostridium botulinum (strain Alaska E43 / Type E3).